A 1701-amino-acid chain; its full sequence is Merozoite surface protein 1 (1701 aa).

A signal peptide spans 1–19; it reads MKIIFFLCSFLFFIINTQC. Residues 89 to 100 show a composition bias toward gly residues; sequence GSGGSVASGGSG. Residues 89–118 are disordered; the sequence is GSGGSVASGGSGNSRRTNPSDNSSDSNTKT. The segment covering 101–116 has biased composition (low complexity); that stretch reads NSRRTNPSDNSSDSNT. Residues Asn110 and Asn239 are each glycosylated (N-linked (GlcNAc...) asparagine). Residues 322-344 form a disordered region; sequence DAENPTTGSKPNPLPENKKKEVE. 3 N-linked (GlcNAc...) asparagine glycosylation sites follow: Asn470, Asn536, and Asn607. The tract at residues 704–739 is disordered; sequence SETTEDGGHSTHTLSQSGETEVTEETEVTEETVGHT. The segment covering 724 to 733 has biased composition (acidic residues); sequence EVTEETEVTE. Asn802, Asn899, Asn919, Asn965, Asn991, Asn1089, and Asn1196 each carry an N-linked (GlcNAc...) asparagine glycan. Positions 889–927 are enriched in low complexity; it reads TGTSSTSSPGNTTVNTAQSATHSNSQNQQSNASSTNTQN. The tract at residues 889 to 936 is disordered; sequence TGTSSTSSPGNTTVNTAQSATHSNSQNQQSNASSTNTQNGVAVSSGPA. Disordered regions lie at residues 1231-1259 and 1451-1472; these read PPQP…TQIP and KEKF…DEQK. Residues 1245–1259 show a composition bias toward polar residues; it reads VSGSSGSTKEETQIP. The span at 1456 to 1465 shows a compositional bias: pro residues; that stretch reads SSPPTTPPSP. N-linked (GlcNAc...) asparagine glycosylation is present at Asn1588. 2 consecutive EGF-like domains span residues 1592-1632 and 1633-1680; these read HQCV…VENP and NPTC…IFCS. 6 cysteine pairs are disulfide-bonded: Cys1594–Cys1605, Cys1599–Cys1615, Cys1617–Cys1628, Cys1636–Cys1649, Cys1643–Cys1663, and Cys1665–Cys1679. The GPI-anchor amidated serine moiety is linked to residue Ser1680. A propeptide spans 1681 to 1701 (removed in mature form); sequence SSNFLGISFLLILMLILYSFI.

Forms a complex composed of subunits p83, p30, p38, and p42 which remain non-covalently associated; the complex is formed at the merozoite surface prior to egress from host erythrocytes. Forms a complex composed of processed MSP1 subunits, MSP6 subunit p36 and MSP7; the complex is formed at the merozoite surface prior to egress from host erythrocytes. Within the complex, interacts (via subunit p38) with MSP6 subunit p36 and (via subunits p83, p30 and p38) with MSP7 (via subunit p22). Forms a complex composed of MSP1, MSP6, DBLMSP1 and DBLMSP2. Within the complex, interacts (via subunit p38) with DBLMSP1 and DBLMSP2. Forms a complex composed of MSP1, and rhoptry proteins RhopH3, RAP1 and CLAG9/RhopH3. Within the complex, interacts (via subunits p42 and p19) with RhopH3 (via C-terminus). Forms a complex composed of MSP1, MSP6, MSP7, MSP9 and MSP3; within the complex, MSP6 and MSP9 mediate the binding to the host erythrocyte. Interacts (via subunits p19 and p42) with MSP9; the interaction is direct; MSP1 subunits p19 or p42, and MSP9 form a co-ligand complex that interacts with host SLC4A1/Band 3 protein. May interact with PFD6. Interacts with host spectrin. As to quaternary structure, interacts with host glycophorin GYPA in a sialic acid-independent manner. In terms of assembly, interacts with host proinflammatory cytokine S100P; the interaction blocks S100P inflammatory and chemotactic activities. Interacts with host SLC4A1/Band 3 (via 5ABC region) on the host erythrocyte surface in a sialic acid-independent manner. In terms of processing, the p190 precursor is cleaved by SUB1 prior to merozoite egress into 4 subunits p83, p30, p38, and p42 which remain non-covalently associated. SUB1-mediated proteolytic cleavage occurs in an orderly manner; the first cleavage occurs at the p30/p38 site, followed by cleavage at the p83/p30 site, in the 3D7 strain a second cleavage occurs at the N-terminus of p83, the last cleavage occurs at the p38/p42 site. The order of cleavage is essential for parasite viability. SUB1-mediated processing is essential for merozoite egress. In a second processing step during erythrocyte invasion, p42 is cleaved by SUB2 into p33 and p19; the latter remains attached to the merozoite surface via its GPI-anchor and is endocytosed during the subsequent ring stage.

The protein localises to the cell membrane. It is found in the secreted. Its subcellular location is the vacuole membrane. In terms of biological role, during the asexual blood stage, involved in merozoite egress from host erythrocytes possibly via its interaction with the host cytoskeleton protein spectrin resulting in the destabilization of the host cytoskeleton and thus leading to erythrocyte cell membrane rupture. Involved in the binding to host erythrocytes and is required for host erythrocyte invasion. Its function is as follows. By binding to host proinflammatory cytokine S100P may interfere with host immune responses. Functionally, involved in merozoite invasion of host erythrocytes. May play a role in the biogenesis and/or function of the food vacuole during the intraerythrocytic development. The sequence is that of Merozoite surface protein 1 from Plasmodium falciparum (isolate FC27 / Papua New Guinea).